The primary structure comprises 342 residues: Heparan sulfate glucosamine 3-O-sulfotransferase 6 (342 aa).

The disordered stretch occupies residues 1–21 (MAGSGGLGGGAGGGQGAGAGQ). The Cytoplasmic portion of the chain corresponds to 1–31 (MAGSGGLGGGAGGGQGAGAGQGAALRASRAP). A helical; Signal-anchor for type II membrane protein transmembrane segment spans residues 32–49 (MLLVALVLGAYCLCALPG). Residues 50–342 (RCPPAARAPA…QMTGQDFGWG (293 aa)) are Lumenal-facing. The tract at residues 55-85 (ARAPAPAPAPSEPSSSVHRPGAPGLPLASGP) is disordered. Residues 66–85 (EPSSSVHRPGAPGLPLASGP) show a composition bias toward low complexity. 100-104 (KGGTR) is a binding site for 3'-phosphoadenylyl sulfate. Substrate-binding positions include 122-128 (EPHFFDR) and 153-156 (KTPS). Residues arginine 181 and serine 189 each contribute to the 3'-phosphoadenylyl sulfate site. A substrate-binding site is contributed by 220 to 221 (WS). N-linked (GlcNAc...) asparagine glycosylation occurs at asparagine 281. A disulfide bridge connects residues cysteine 288 and cysteine 300. 305–309 (KGRPH) contributes to the 3'-phosphoadenylyl sulfate binding site.

Belongs to the sulfotransferase 1 family.

The protein resides in the golgi apparatus membrane. The enzyme catalyses alpha-D-glucosaminyl-[heparan sulfate](n) + 3'-phosphoadenylyl sulfate = 3-sulfo-alpha-D-glucosaminyl-[heparan sulfate](n) + adenosine 3',5'-bisphosphate + H(+). Sulfotransferase that utilizes 3'-phospho-5'-adenylyl sulfate (PAPS) to catalyze the transfer of a sulfo group to heparan sulfate. The substrate-specific O-sulfation generates an enzyme-modified heparan sulfate which acts as a binding receptor to Herpes Simplex Virus-1 (HSV-1) and permits its entry. Unlike 3-OST-1, does not convert non-anticoagulant heparan sulfate to anticoagulant heparan sulfate. This chain is Heparan sulfate glucosamine 3-O-sulfotransferase 6 (HS3ST6), found in Homo sapiens (Human).